The chain runs to 1124 residues: Sodium/hydrogen exchanger 11 (1124 aa).

The next 11 helical transmembrane spans lie at 25-45 (LVEE…GGLL), 52-72 (CEVI…HMAY), 90-110 (FSLY…DVEF), 120-140 (VLLT…YVVI), 179-199 (IYID…SIFF), 224-244 (DILG…CILA), 254-274 (IILC…LGMS), 305-325 (IFSS…IGCG), 335-355 (IPFI…TILL), 372-392 (GVVI…APDV), and 405-425 (MFIL…SYVM). N-linked (GlcNAc...) asparagine glycosylation is found at N447 and N473. 4 consecutive transmembrane segments (helical) span residues 612–632 (TGQI…WPMA), 641–661 (ISIN…KIII), 674–694 (LEFF…FVKL), and 706–726 (VIMG…IVPI). An ion transport-like region spans residues 642 to 723 (SINYYFMFLY…IRFLPLFKII (82 aa)). 867–999 (IWLEGKDVLI…EYKIWLKLAL (133 aa)) lines the a nucleoside 3',5'-cyclic phosphate pocket.

This sequence belongs to the monovalent cation:proton antiporter 1 (CPA1) transporter (TC 2.A.36) family.

Its subcellular location is the membrane. Its function is as follows. Involved in pH regulation. The protein is Sodium/hydrogen exchanger 11 (SLC9C2) of Homo sapiens (Human).